The primary structure comprises 602 residues: Elongation factor 4 (602 aa).

Residues 6–188 (DHIRNFSIVA…AIVNKLPAPK (183 aa)) form the tr-type G domain. GTP-binding positions include 18–23 (DHGKST) and 135–138 (NKID).

Belongs to the TRAFAC class translation factor GTPase superfamily. Classic translation factor GTPase family. LepA subfamily.

It localises to the cell inner membrane. It carries out the reaction GTP + H2O = GDP + phosphate + H(+). Required for accurate and efficient protein synthesis under certain stress conditions. May act as a fidelity factor of the translation reaction, by catalyzing a one-codon backward translocation of tRNAs on improperly translocated ribosomes. Back-translocation proceeds from a post-translocation (POST) complex to a pre-translocation (PRE) complex, thus giving elongation factor G a second chance to translocate the tRNAs correctly. Binds to ribosomes in a GTP-dependent manner. This is Elongation factor 4 from Brucella suis (strain ATCC 23445 / NCTC 10510).